The primary structure comprises 92 residues: C-C motif chemokine 4 (92 aa).

Positions 1–23 (MKLCVSALSLLLLVAAFCAPGFS) are cleaved as a signal peptide. Disulfide bonds link cysteine 34–cysteine 58 and cysteine 35–cysteine 74.

It belongs to the intercrine beta (chemokine CC) family. As to quaternary structure, homodimer.

It is found in the secreted. In terms of biological role, monokine with inflammatory and chemokinetic properties. This Mus musculus (Mouse) protein is C-C motif chemokine 4 (Ccl4).